The following is a 662-amino-acid chain: ATP-dependent zinc metalloprotease YME1 homolog (662 aa).

Position 206–213 (206–213 (GPPGVGKT)) interacts with ATP. His425 provides a ligand contact to Zn(2+). Residue Glu426 is part of the active site. The Zn(2+) site is built by His429 and Asp503.

In the N-terminal section; belongs to the AAA ATPase family. This sequence in the C-terminal section; belongs to the peptidase M41 family. The cofactor is Zn(2+).

In terms of biological role, putative ATP-dependent protease. This is ATP-dependent zinc metalloprotease YME1 homolog from Schistosoma mansoni (Blood fluke).